Consider the following 276-residue polypeptide: 3-methyl-2-oxobutanoate hydroxymethyltransferase (276 aa).

Mg(2+)-binding residues include Asp-49 and Asp-88. 3-methyl-2-oxobutanoate is bound by residues 49–50, Asp-88, and Lys-118; that span reads DS. Glu-120 contributes to the Mg(2+) binding site. Glu-187 functions as the Proton acceptor in the catalytic mechanism.

The protein belongs to the PanB family. Homodecamer; pentamer of dimers. Mg(2+) serves as cofactor.

The protein localises to the cytoplasm. It carries out the reaction 3-methyl-2-oxobutanoate + (6R)-5,10-methylene-5,6,7,8-tetrahydrofolate + H2O = 2-dehydropantoate + (6S)-5,6,7,8-tetrahydrofolate. The protein operates within cofactor biosynthesis; (R)-pantothenate biosynthesis; (R)-pantoate from 3-methyl-2-oxobutanoate: step 1/2. Functionally, catalyzes the reversible reaction in which hydroxymethyl group from 5,10-methylenetetrahydrofolate is transferred onto alpha-ketoisovalerate to form ketopantoate. In Afipia carboxidovorans (strain ATCC 49405 / DSM 1227 / KCTC 32145 / OM5) (Oligotropha carboxidovorans), this protein is 3-methyl-2-oxobutanoate hydroxymethyltransferase.